Consider the following 75-residue polypeptide: Small integral membrane protein 7 (75 aa).

Residues 1-17 form the signal peptide; that stretch reads MIGDILLFGTLLMNAGA. The Extracellular segment spans residues 18 to 53; it reads VLNFKLKKKDTQGFGEESREPSTGDNIREFLLSLRY. A helical membrane pass occupies residues 54–74; the sequence is FRIFIALWNIFMMFCMIVLFG. A topological domain (cytoplasmic) is located at residue Ser75.

Belongs to the SMIM7 family.

The protein localises to the membrane. The protein is Small integral membrane protein 7 (SMIM7) of Homo sapiens (Human).